The sequence spans 322 residues: tRNA uridine(34) hydroxylase (322 aa).

Residues 125–219 form the Rhodanese domain; sequence QDPDTIVIDA…YGKDPEVKGQ (95 aa). The active-site Cysteine persulfide intermediate is Cys179.

The protein belongs to the TrhO family.

The catalysed reaction is uridine(34) in tRNA + AH2 + O2 = 5-hydroxyuridine(34) in tRNA + A + H2O. In terms of biological role, catalyzes oxygen-dependent 5-hydroxyuridine (ho5U) modification at position 34 in tRNAs. In Bacillus velezensis (strain DSM 23117 / BGSC 10A6 / LMG 26770 / FZB42) (Bacillus amyloliquefaciens subsp. plantarum), this protein is tRNA uridine(34) hydroxylase.